A 391-amino-acid chain; its full sequence is DNA repair protein NreB (391 aa).

Residues 3 to 17 (CIECRGRMLCSRKVC) form a C4-type zinc finger. The short motif at 384 to 391 (QRTLWEFM) is the PIP motif element.

It belongs to the Nre family. In terms of assembly, interacts with the DNA polymerase sliding clamp (PCNA) via the PIP (PCNA-interacting peptide) motif.

Functionally, involved in DNA damage repair. The polypeptide is DNA repair protein NreB (Archaeoglobus fulgidus (strain ATCC 49558 / DSM 4304 / JCM 9628 / NBRC 100126 / VC-16)).